A 313-amino-acid chain; its full sequence is Fe-S cluster assembly protein dre2 (313 aa).

Disordered stretches follow at residues 1–25 (MSITIDTSVDIDLPTPPQSNGSQKR) and 151–187 (GRKKKDKTNGVNGVQNGVATNGASTNGVGMFDPAQNN). Positions 20–145 (NGSQKRNLLL…FEKPVQEAAV (126 aa)) are N-terminal SAM-like domain. Positions 146 to 203 (PLKLGGRKKKDKTNGVNGVQNGVATNGASTNGVGMFDPAQNNDDELIDEDALLSDDDL) are linker. Residues 159 to 177 (NGVNGVQNGVATNGASTNG) show a composition bias toward polar residues. 4 residues coordinate [2Fe-2S] cluster: Cys-213, Cys-225, Cys-228, and Cys-230. The tract at residues 213–230 (CVPETAKKRRRPCKDCTC) is fe-S binding site A. Cys-276, Cys-279, Cys-287, and Cys-290 together coordinate [4Fe-4S] cluster. 2 short sequence motifs (cx2C motif) span residues 276–279 (CNSC) and 287–290 (CSSC). The fe-S binding site B stretch occupies residues 276–290 (CNSCSLGDAFRCSSC).

Belongs to the anamorsin family. Monomer. Interacts with tah18. Interacts with mia40. [2Fe-2S] cluster is required as a cofactor. [4Fe-4S] cluster serves as cofactor.

It localises to the cytoplasm. The protein resides in the mitochondrion intermembrane space. Functionally, component of the cytosolic iron-sulfur (Fe-S) protein assembly (CIA) machinery required for the maturation of extramitochondrial Fe-S proteins. Part of an electron transfer chain functioning in an early step of cytosolic Fe-S biogenesis, facilitating the de novo assembly of a [4Fe-4S] cluster on the scaffold complex cfd1-nbp35. Electrons are transferred to dre2 from NADPH via the FAD- and FMN-containing protein tah18. Tah18-dre2 are also required for the assembly of the diferric tyrosyl radical cofactor of ribonucleotide reductase (RNR), probably by providing electrons for reduction during radical cofactor maturation in the catalytic small subunit rnr2. In Aspergillus flavus (strain ATCC 200026 / FGSC A1120 / IAM 13836 / NRRL 3357 / JCM 12722 / SRRC 167), this protein is Fe-S cluster assembly protein dre2.